Reading from the N-terminus, the 449-residue chain is NADP-specific glutamate dehydrogenase (449 aa).

Residues lysine 92, glutamine 113, and lysine 116 each contribute to the substrate site. Catalysis depends on lysine 128, which acts as the Proton donor. Glycine 167 contributes to the substrate binding site. 2 residues coordinate NADP(+): threonine 211 and asparagine 242. Residue serine 380 participates in substrate binding.

This sequence belongs to the Glu/Leu/Phe/Val dehydrogenases family. In terms of assembly, homohexamer.

It carries out the reaction L-glutamate + NADP(+) + H2O = 2-oxoglutarate + NH4(+) + NADPH + H(+). Functionally, catalyzes the reversible oxidative deamination of glutamate to alpha-ketoglutarate and ammonia. This Haemophilus influenzae (strain ATCC 51907 / DSM 11121 / KW20 / Rd) protein is NADP-specific glutamate dehydrogenase (gdhA).